Reading from the N-terminus, the 417-residue chain is Glutamyl-tRNA reductase (417 aa).

Residues 49–52 (TCNR), serine 105, 110–112 (EPQ), and glutamine 116 contribute to the substrate site. Cysteine 50 serves as the catalytic Nucleophile. 185–190 (GAGEMI) provides a ligand contact to NADP(+).

It belongs to the glutamyl-tRNA reductase family. Homodimer.

The catalysed reaction is (S)-4-amino-5-oxopentanoate + tRNA(Glu) + NADP(+) = L-glutamyl-tRNA(Glu) + NADPH + H(+). The protein operates within porphyrin-containing compound metabolism; protoporphyrin-IX biosynthesis; 5-aminolevulinate from L-glutamyl-tRNA(Glu): step 1/2. Functionally, catalyzes the NADPH-dependent reduction of glutamyl-tRNA(Glu) to glutamate 1-semialdehyde (GSA). The sequence is that of Glutamyl-tRNA reductase from Azoarcus sp. (strain BH72).